Reading from the N-terminus, the 327-residue chain is Beta-ketoacyl-[acyl-carrier-protein] synthase III (327 aa).

Residues Cys-114 and His-254 contribute to the active site. Residues 255 to 259 (QANRR) are ACP-binding. The active site involves Asn-284.

Belongs to the thiolase-like superfamily. FabH family. In terms of assembly, homodimer.

The protein localises to the cytoplasm. The catalysed reaction is malonyl-[ACP] + acetyl-CoA + H(+) = 3-oxobutanoyl-[ACP] + CO2 + CoA. Its pathway is lipid metabolism; fatty acid biosynthesis. Catalyzes the condensation reaction of fatty acid synthesis by the addition to an acyl acceptor of two carbons from malonyl-ACP. Catalyzes the first condensation reaction which initiates fatty acid synthesis and may therefore play a role in governing the total rate of fatty acid production. Possesses both acetoacetyl-ACP synthase and acetyl transacylase activities. Its substrate specificity determines the biosynthesis of branched-chain and/or straight-chain of fatty acids. This Lactobacillus helveticus (strain DPC 4571) protein is Beta-ketoacyl-[acyl-carrier-protein] synthase III.